Consider the following 191-residue polypeptide: Calcium-activated potassium channel subunit beta-1 (191 aa).

The Cytoplasmic portion of the chain corresponds to 1-15; the sequence is MGKKLVMAQKRGETR. Residues 16–36 traverse the membrane as a helical segment; it reads ALCLGVAMVMCAVIAYYILGT. Residues 37–157 lie on the Extracellular side of the membrane; it reads TMLPLYQKSV…YRRLYGPQTL (121 aa). Asn80 and Asn142 each carry an N-linked (GlcNAc...) asparagine glycan. A helical membrane pass occupies residues 158 to 178; sequence LFSLFWPTFLLTGGLLIIAMV. Topologically, residues 179-191 are cytoplasmic; the sequence is KINQSLSILAAQR.

The protein belongs to the KCNMB (TC 8.A.14.1) family. KCNMB1 subfamily. Interacts with KCNMA1 tetramer. There are probably 4 molecules of KCMNB1 per KCNMA1 tetramer. In terms of processing, N-glycosylated.

It is found in the membrane. Functionally, regulatory subunit of the calcium activated potassium KCNMA1 (maxiK) channel. Modulates the calcium sensitivity and gating kinetics of KCNMA1, thereby contributing to KCNMA1 channel diversity. Increases the apparent Ca(2+)/voltage sensitivity of the KCNMA1 channel. It also modifies KCNMA1 channel kinetics and alters its pharmacological properties. It slows down the activation and the deactivation kinetics of the channel. Acts as a negative regulator of smooth muscle contraction by enhancing the calcium sensitivity to KCNMA1. Its presence is also a requirement for internal binding of the KCNMA1 channel opener dehydrosoyasaponin I (DHS-1) triterpene glycoside and for external binding of the agonist hormone 17-beta-estradiol (E2). Increases the binding activity of charybdotoxin (CTX) toxin to KCNMA1 peptide blocker by increasing the CTX association rate and decreasing the dissociation rate. This is Calcium-activated potassium channel subunit beta-1 (KCNMB1) from Canis lupus familiaris (Dog).